The primary structure comprises 302 residues: Putative gluconeogenesis factor (302 aa).

Belongs to the gluconeogenesis factor family.

It localises to the cytoplasm. Functionally, required for morphogenesis under gluconeogenic growth conditions. In Salmonella typhi, this protein is Putative gluconeogenesis factor (ybhK).